The sequence spans 359 residues: UDP-N-acetylglucosamine--N-acetylmuramyl-(pentapeptide) pyrophosphoryl-undecaprenol N-acetylglucosamine transferase (359 aa).

UDP-N-acetyl-alpha-D-glucosamine-binding positions include Thr-15–Gly-17, Asn-127, Arg-166, Ser-191, Ile-245, Ala-264–Glu-269, and Gln-290.

It belongs to the glycosyltransferase 28 family. MurG subfamily.

The protein localises to the cell inner membrane. The catalysed reaction is di-trans,octa-cis-undecaprenyl diphospho-N-acetyl-alpha-D-muramoyl-L-alanyl-D-glutamyl-meso-2,6-diaminopimeloyl-D-alanyl-D-alanine + UDP-N-acetyl-alpha-D-glucosamine = di-trans,octa-cis-undecaprenyl diphospho-[N-acetyl-alpha-D-glucosaminyl-(1-&gt;4)]-N-acetyl-alpha-D-muramoyl-L-alanyl-D-glutamyl-meso-2,6-diaminopimeloyl-D-alanyl-D-alanine + UDP + H(+). It functions in the pathway cell wall biogenesis; peptidoglycan biosynthesis. Its function is as follows. Cell wall formation. Catalyzes the transfer of a GlcNAc subunit on undecaprenyl-pyrophosphoryl-MurNAc-pentapeptide (lipid intermediate I) to form undecaprenyl-pyrophosphoryl-MurNAc-(pentapeptide)GlcNAc (lipid intermediate II). This chain is UDP-N-acetylglucosamine--N-acetylmuramyl-(pentapeptide) pyrophosphoryl-undecaprenol N-acetylglucosamine transferase, found in Pseudomonas putida (strain ATCC 700007 / DSM 6899 / JCM 31910 / BCRC 17059 / LMG 24140 / F1).